The primary structure comprises 392 residues: 2,3-bisphosphoglycerate-independent phosphoglycerate mutase (392 aa).

This sequence belongs to the BPG-independent phosphoglycerate mutase family. A-PGAM subfamily.

The enzyme catalyses (2R)-2-phosphoglycerate = (2R)-3-phosphoglycerate. Its pathway is carbohydrate degradation; glycolysis; pyruvate from D-glyceraldehyde 3-phosphate: step 3/5. Functionally, catalyzes the interconversion of 2-phosphoglycerate and 3-phosphoglycerate. This Methanothrix thermoacetophila (strain DSM 6194 / JCM 14653 / NBRC 101360 / PT) (Methanosaeta thermophila) protein is 2,3-bisphosphoglycerate-independent phosphoglycerate mutase.